The primary structure comprises 490 residues: Cytochrome P450 2C19 (490 aa).

Cys-435 lines the heme pocket.

This sequence belongs to the cytochrome P450 family. The cofactor is heme.

The protein resides in the endoplasmic reticulum membrane. The protein localises to the microsome membrane. It catalyses the reaction an organic molecule + reduced [NADPH--hemoprotein reductase] + O2 = an alcohol + oxidized [NADPH--hemoprotein reductase] + H2O + H(+). The catalysed reaction is (5Z,8Z,11Z)-eicosatrienoate + reduced [NADPH--hemoprotein reductase] + O2 = 19-hydroxy-(5Z,8Z,11Z)-eicosatrienoate + oxidized [NADPH--hemoprotein reductase] + H2O + H(+). It carries out the reaction (5Z,8Z,11Z,14Z)-eicosatetraenoate + reduced [NADPH--hemoprotein reductase] + O2 = 19-hydroxy-(5Z,8Z,11Z,14Z)-eicosatetraenoate + oxidized [NADPH--hemoprotein reductase] + H2O + H(+). The enzyme catalyses (5Z,8Z,11Z,14Z,17Z)-eicosapentaenoate + reduced [NADPH--hemoprotein reductase] + O2 = 19-hydroxy-(5Z,8Z,11Z,14Z,17Z)-eicosapentaenoate + oxidized [NADPH--hemoprotein reductase] + H2O + H(+). It catalyses the reaction (4Z,7Z,10Z,13Z,16Z,19Z)-docosahexaenoate + reduced [NADPH--hemoprotein reductase] + O2 = 21-hydroxy-(4Z,7Z,10Z,13Z,16Z,19Z)-docosahexaenoate + oxidized [NADPH--hemoprotein reductase] + H2O + H(+). The catalysed reaction is (5Z,8Z,11Z,14Z)-eicosatetraenoate + reduced [NADPH--hemoprotein reductase] + O2 = (8R,9S)-epoxy-(5Z,11Z,14Z)-eicosatrienoate + oxidized [NADPH--hemoprotein reductase] + H2O + H(+). It carries out the reaction (5Z,8Z,11Z,14Z)-eicosatetraenoate + reduced [NADPH--hemoprotein reductase] + O2 = (11R,12S)-epoxy-(5Z,8Z,14Z)-eicosatrienoate + oxidized [NADPH--hemoprotein reductase] + H2O + H(+). The enzyme catalyses (5Z,8Z,11Z,14Z)-eicosatetraenoate + reduced [NADPH--hemoprotein reductase] + O2 = (11S,12R)-epoxy-(5Z,8Z,14Z)-eicosatrienoate + oxidized [NADPH--hemoprotein reductase] + H2O + H(+). It catalyses the reaction (5Z,8Z,11Z,14Z)-eicosatetraenoate + reduced [NADPH--hemoprotein reductase] + O2 = (14R,15S)-epoxy-(5Z,8Z,11Z)-eicosatrienoate + oxidized [NADPH--hemoprotein reductase] + H2O + H(+). The catalysed reaction is (5Z,8Z,11Z,14Z,17Z)-eicosapentaenoate + reduced [NADPH--hemoprotein reductase] + O2 = (17R,18S)-epoxy-(5Z,8Z,11Z,14Z)-eicosatetraenoate + oxidized [NADPH--hemoprotein reductase] + H2O + H(+). It carries out the reaction (4Z,7Z,10Z,13Z,16Z,19Z)-docosahexaenoate + reduced [NADPH--hemoprotein reductase] + O2 = (19R,20S)-epoxy-(4Z,7Z,10Z,13Z,16Z)-docosapentaenoate + oxidized [NADPH--hemoprotein reductase] + H2O + H(+). The enzyme catalyses (4Z,7Z,10Z,13Z,16Z,19Z)-docosahexaenoate + reduced [NADPH--hemoprotein reductase] + O2 = (19S,20R)-epoxy-(4Z,7Z,10Z,13Z,16Z)-docosapentaenoate + oxidized [NADPH--hemoprotein reductase] + H2O + H(+). It catalyses the reaction (4R)-limonene + reduced [NADPH--hemoprotein reductase] + O2 = (1R,5S)-carveol + oxidized [NADPH--hemoprotein reductase] + H2O + H(+). The catalysed reaction is (4S)-limonene + reduced [NADPH--hemoprotein reductase] + O2 = (1S,5R)-carveol + oxidized [NADPH--hemoprotein reductase] + H2O + H(+). It carries out the reaction (4S)-limonene + reduced [NADPH--hemoprotein reductase] + O2 = (4S)-perillyl alcohol + oxidized [NADPH--hemoprotein reductase] + H2O + H(+). The enzyme catalyses fenbendazole + reduced [NADPH--hemoprotein reductase] + O2 = 4'-hydroxyfenbendazole + oxidized [NADPH--hemoprotein reductase] + H2O + H(+). It functions in the pathway lipid metabolism; fatty acid metabolism. The protein operates within terpene metabolism; (4R)-limonene degradation. Its function is as follows. A cytochrome P450 monooxygenase involved in the metabolism of polyunsaturated fatty acids (PUFA). Mechanistically, uses molecular oxygen inserting one oxygen atom into a substrate, and reducing the second into a water molecule, with two electrons provided by NADPH via cytochrome P450 reductase (NADPH--hemoprotein reductase). Catalyzes the hydroxylation of carbon-hydrogen bonds. Hydroxylates PUFA specifically at the omega-1 position. Catalyzes the epoxidation of double bonds of PUFA. Also metabolizes plant monoterpenes such as limonene. Oxygenates (R)- and (S)-limonene to produce carveol and perillyl alcohol. Responsible for the metabolism of a number of therapeutic agents such as the anticonvulsant drug S-mephenytoin, omeprazole, proguanil, certain barbiturates, diazepam, propranolol, citalopram and imipramine. Hydroxylates fenbendazole at the 4' position. This Homo sapiens (Human) protein is Cytochrome P450 2C19 (CYP2C19).